The primary structure comprises 287 residues: HTH-type transcriptional regulator MurR (287 aa).

In terms of domain architecture, HTH rpiR-type spans 1 to 77 (MLYLAKMRNA…MALIEEYSVN (77 aa)). Residues 37–56 (SRNLAKQLEVSQSSIVKFAQ) constitute a DNA-binding region (H-T-H motif). In terms of domain architecture, SIS spans 128-268 (VINLISKARL…FVGMVQLNDV (141 aa)).

In terms of assembly, homotetramer.

The protein operates within amino-sugar metabolism; N-acetylmuramate degradation [regulation]. Functionally, represses the expression of the murPQ operon involved in the uptake and degradation of N-acetylmuramic acid (MurNAc). Binds to two adjacent inverted repeats within the operator region. MurNAc 6-phosphate, the substrate of MurQ, is the specific inducer that weakens binding of MurR to the operator. This chain is HTH-type transcriptional regulator MurR, found in Citrobacter koseri (strain ATCC BAA-895 / CDC 4225-83 / SGSC4696).